Consider the following 207-residue polypeptide: 8-oxoguanine DNA glycosylase/AP lyase (207 aa).

Active-site residues include lysine 129 and aspartate 147.

The protein belongs to the type-2 OGG1 family.

The enzyme catalyses 2'-deoxyribonucleotide-(2'-deoxyribose 5'-phosphate)-2'-deoxyribonucleotide-DNA = a 3'-end 2'-deoxyribonucleotide-(2,3-dehydro-2,3-deoxyribose 5'-phosphate)-DNA + a 5'-end 5'-phospho-2'-deoxyribonucleoside-DNA + H(+). Catalyzes the excision of an oxidatively damaged form of guanine (7,8-dihydro-8-oxoguanine = 8-oxoG) from DNA. Also cleaves the DNA backbone at apurinic/apyrimidinic sites (AP sites). This is 8-oxoguanine DNA glycosylase/AP lyase from Thermotoga maritima (strain ATCC 43589 / DSM 3109 / JCM 10099 / NBRC 100826 / MSB8).